Reading from the N-terminus, the 136-residue chain is Large ribosomal subunit protein eL27B (136 aa).

Belongs to the eukaryotic ribosomal protein eL27 family. In terms of assembly, component of the large ribosomal subunit (LSU). Mature yeast ribosomes consist of a small (40S) and a large (60S) subunit. The 40S small subunit contains 1 molecule of ribosomal RNA (18S rRNA) and at least 33 different proteins. The large 60S subunit contains 3 rRNA molecules (25S, 5.8S and 5S rRNA) and at least 46 different proteins.

The protein resides in the cytoplasm. Its function is as follows. Component of the ribosome, a large ribonucleoprotein complex responsible for the synthesis of proteins in the cell. The small ribosomal subunit (SSU) binds messenger RNAs (mRNAs) and translates the encoded message by selecting cognate aminoacyl-transfer RNA (tRNA) molecules. The large subunit (LSU) contains the ribosomal catalytic site termed the peptidyl transferase center (PTC), which catalyzes the formation of peptide bonds, thereby polymerizing the amino acids delivered by tRNAs into a polypeptide chain. The nascent polypeptides leave the ribosome through a tunnel in the LSU and interact with protein factors that function in enzymatic processing, targeting, and the membrane insertion of nascent chains at the exit of the ribosomal tunnel. The sequence is that of Large ribosomal subunit protein eL27B (rpl2702) from Schizosaccharomyces pombe (strain 972 / ATCC 24843) (Fission yeast).